The chain runs to 228 residues: Large ribosomal subunit protein uL23m (228 aa).

Positions 194–228 are disordered; that stretch reads PEEEGWSEVEENLPLDESAESAAEESSSKGSETRQ. Residues 195 to 216 are compositionally biased toward acidic residues; that stretch reads EEEGWSEVEENLPLDESAESAA.

It belongs to the universal ribosomal protein uL23 family. Component of the mitochondrial large ribosomal subunit (mt-LSU). Mature N.crassa 74S mitochondrial ribosomes consist of a small (37S) and a large (54S) subunit. The 37S small subunit contains a 16S ribosomal RNA (16S mt-rRNA) and 32 different proteins. The 54S large subunit contains a 23S rRNA (23S mt-rRNA) and 42 different proteins. uL23m forms the wall of the exit tunnel.

It is found in the mitochondrion. Its function is as follows. Component of the mitochondrial ribosome (mitoribosome), a dedicated translation machinery responsible for the synthesis of mitochondrial genome-encoded proteins, including at least some of the essential transmembrane subunits of the mitochondrial respiratory chain. The mitoribosomes are attached to the mitochondrial inner membrane and translation products are cotranslationally integrated into the membrane. This Neurospora crassa (strain ATCC 24698 / 74-OR23-1A / CBS 708.71 / DSM 1257 / FGSC 987) protein is Large ribosomal subunit protein uL23m (mrp20).